The primary structure comprises 348 residues: Zinc finger protein 843 (348 aa).

The C2H2-type 1 zinc-finger motif lies at 33 to 55 (CKCKACGRGFTQSASLLQHWRVH). A C2H2-type 2; degenerate zinc finger spans residues 145 to 167 (FCCCSCGDSVNEKTSLSQRVLPH). The segment covering 184–195 (APSSVAPDSTSG) has biased composition (polar residues). Disordered regions lie at residues 184 to 203 (APSS…GSPG) and 256 to 329 (ATQP…WRGA).

The polypeptide is Zinc finger protein 843 (ZNF843) (Homo sapiens (Human)).